Reading from the N-terminus, the 103-residue chain is Cell division topological specificity factor (103 aa).

Belongs to the MinE family.

Its function is as follows. Prevents the cell division inhibition by proteins MinC and MinD at internal division sites while permitting inhibition at polar sites. This ensures cell division at the proper site by restricting the formation of a division septum at the midpoint of the long axis of the cell. In Prochlorococcus marinus (strain MIT 9211), this protein is Cell division topological specificity factor.